We begin with the raw amino-acid sequence, 412 residues long: ATP phosphoribosyltransferase regulatory subunit (412 aa).

Belongs to the class-II aminoacyl-tRNA synthetase family. HisZ subfamily. As to quaternary structure, heteromultimer composed of HisG and HisZ subunits.

The protein resides in the cytoplasm. It functions in the pathway amino-acid biosynthesis; L-histidine biosynthesis; L-histidine from 5-phospho-alpha-D-ribose 1-diphosphate: step 1/9. Required for the first step of histidine biosynthesis. May allow the feedback regulation of ATP phosphoribosyltransferase activity by histidine. In Dehalococcoides mccartyi (strain ATCC BAA-2100 / JCM 16839 / KCTC 5957 / BAV1), this protein is ATP phosphoribosyltransferase regulatory subunit.